We begin with the raw amino-acid sequence, 357 residues long: Elongation factor Ts (357 aa).

Positions 82-85 (TDFV) are involved in Mg(2+) ion dislocation from EF-Tu.

It belongs to the EF-Ts family.

The protein localises to the cytoplasm. Its function is as follows. Associates with the EF-Tu.GDP complex and induces the exchange of GDP to GTP. It remains bound to the aminoacyl-tRNA.EF-Tu.GTP complex up to the GTP hydrolysis stage on the ribosome. The protein is Elongation factor Ts of Campylobacter jejuni subsp. jejuni serotype O:23/36 (strain 81-176).